Here is a 378-residue protein sequence, read N- to C-terminus: Zinc transporter 7 (378 aa).

Residues 1 to 37 (MLPLSIKDDEYKPPRLNLFRKMSGWFRSILADKTSRN) lie on the Cytoplasmic side of the membrane. A helical membrane pass occupies residues 38 to 58 (LFFFLCLNLSFAFVELLYGVW). The Lumenal portion of the chain corresponds to 59–67 (SNSLGLISD). A helical transmembrane segment spans residues 68 to 88 (SFHMFFDCTALLAGLAASVIS). The Cytoplasmic portion of the chain corresponds to 89-102 (KWRSNDAFSYGYVR). Residues 103 to 123 (AEVLAGFVNGLFLIFTAFFIF) traverse the membrane as a helical segment. Residues 124-140 (SEGVERALEPPDVHHER) lie on the Lumenal side of the membrane. Residues 141–161 (LLPVSILGFIVNLIGIFVFQH) traverse the membrane as a helical segment. The segment at 161–223 (HGGHGHSHGS…HGQDYCHDDH (63 aa)) is his-rich loop. Residues 162 to 238 (GGHGHSHGSG…TGSSKQILQG (77 aa)) are Cytoplasmic-facing. The disordered stretch occupies residues 185-214 (HGHSHRGHGHSHEHKHGHTHDHGHSHGLSH). Over residues 186-211 (GHSHRGHGHSHEHKHGHTHDHGHSHG) the composition is skewed to basic residues. The helical transmembrane segment at 239–259 (VFLHIVADTLGSIGVIISAIL) threads the bilayer. The Lumenal portion of the chain corresponds to 260-264 (MQNYG). A helical membrane pass occupies residues 265-285 (LMIADPICSMLIALLIGVSIV). Over 286-378 (PLLKESIGIL…LYIQIDVAAM (93 aa)) the chain is Cytoplasmic.

Belongs to the cation diffusion facilitator (CDF) transporter (TC 2.A.4) family. SLC30A subfamily. Homooligomer.

It is found in the golgi apparatus membrane. The protein localises to the cytoplasmic vesicle. Its subcellular location is the golgi apparatus. It localises to the trans-Golgi network. The protein resides in the sarcoplasmic reticulum. It is found in the mitochondrion. It catalyses the reaction Zn(2+)(in) = Zn(2+)(out). In terms of biological role, zinc ion transporter mediating zinc entry from the cytosol into the lumen of organelles along the secretory pathway. By contributing to zinc ion homeostasis within the early secretory pathway, regulates the activation and folding of enzymes like alkaline phosphatases. The polypeptide is Zinc transporter 7 (SLC30A7) (Gallus gallus (Chicken)).